The following is a 1235-amino-acid chain: Ubiquitin carboxyl-terminal hydrolase 40 (1235 aa).

The USP domain occupies 41-482; the sequence is SGIRNQGGTC…SAYMLFYRKA (442 aa). The active-site Nucleophile is Cys-50. Residue His-305 is the Proton acceptor of the active site.

It belongs to the peptidase C19 family.

The enzyme catalyses Thiol-dependent hydrolysis of ester, thioester, amide, peptide and isopeptide bonds formed by the C-terminal Gly of ubiquitin (a 76-residue protein attached to proteins as an intracellular targeting signal).. This Mus musculus (Mouse) protein is Ubiquitin carboxyl-terminal hydrolase 40 (Usp40).